A 955-amino-acid chain; its full sequence is Kinesin-like protein K39 (955 aa).

The Kinesin motor domain maps to 12 to 392; it reads RVKVSVRVRP…LRYASRARDI (381 aa). 122–129 lines the ATP pocket; the sequence is GQTGSGKT. The stretch at 426-955 forms a coiled coil; sequence PAYVSELKKK…EERAAELASQ (530 aa). 2 disordered regions span residues 682-712 and 725-955; these read ELDA…RESE and TAAA…LASQ. 7 tandem repeats follow at residues 704–742, 743–781, 782–820, 821–859, 860–898, 899–937, and 938–955. The segment at 704–955 is 7 X 39 AA approximate tandem repeats; the sequence is LEQQLRESEE…EERAAELASQ (252 aa). Basic and acidic residues-rich tracts occupy residues 785-794, 824-833, 863-872, 902-911, and 941-955; these read QLRDSEERAA, QLRESEERAA, and QLRD…LASQ.

The protein belongs to the TRAFAC class myosin-kinesin ATPase superfamily. Kinesin family.

The protein resides in the cytoplasm. It is found in the cytoskeleton. In Leishmania chagasi, this protein is Kinesin-like protein K39 (KIN).